The chain runs to 164 residues: CB1 cannabinoid receptor-interacting protein 1 (164 aa).

This sequence belongs to the CNRIP family. Interacts with the cannabinoid receptor CNR1 (via C-terminus). Does not interact with cannabinoid receptor CNR2.

Functionally, suppresses cannabinoid receptor CNR1-mediated tonic inhibition of voltage-gated calcium channels. Does not suppress cannabinoid receptor CNR1-mediated tonic inhibition of voltage-gated calcium channels. The protein is CB1 cannabinoid receptor-interacting protein 1 (CNRIP1) of Homo sapiens (Human).